Here is a 370-residue protein sequence, read N- to C-terminus: Putrescine-binding periplasmic protein PotF (370 aa).

The signal sequence occupies residues 1 to 26 (MTALNKKWLSGLVAGALMAVSVGTLA). Ser38 contacts putrescine. Cys175 and Cys239 form a disulfide bridge. Putrescine-binding residues include Asp247 and Asp278.

Belongs to the bacterial solute-binding protein PotD/PotF family. The complex is composed of two ATP-binding proteins (PotG), two transmembrane proteins (PotH and PotI) and a solute-binding protein (PotF).

The protein localises to the periplasm. Its activity is regulated as follows. Transport is feedback inhibited by intracellular polyamines. Part of the ABC transporter complex PotFGHI involved in putrescine uptake. Binds putrescine. Imports putrescine for maintenance of the optimal concentration of polyamines necessary for cell growth in the presence of glucose. The chain is Putrescine-binding periplasmic protein PotF from Escherichia coli (strain K12).